A 119-amino-acid polypeptide reads, in one-letter code: Anther-specific protein BCP1 (119 aa).

The N-terminal stretch at 1-23 is a signal peptide; it reads MGRQNVVVVFGLVFLAVLGLAAA. Positions 24-42 are enriched in low complexity; the sequence is ASSPSPSASPSKAPSTSTP. The segment at 24 to 95 is disordered; that stretch reads ASSPSPSASP…PSGSADSADS (72 aa). Residues 24 to 98 are Extracellular-facing; that stretch reads ASSPSPSASP…SADSADSGAA (75 aa). Positions 56–69 are enriched in acidic residues; that stretch reads TDDDAAASPGDDDV. The span at 82-95 shows a compositional bias: low complexity; sequence GSNGPSGSADSADS. Residues 99 to 118 traverse the membrane as a helical segment; that stretch reads ALGVSAVVVGVTSIVGSFLF. A topological domain (cytoplasmic) is located at residue Phe-119.

Expressed in mature pollen grains, developing microspores and tapetal cells.

The protein resides in the membrane. Its function is as follows. Required for pollen fertility and development. Active in both diploid tapetum and haploid microspores. Major pollen protein. In Brassica campestris (Field mustard), this protein is Anther-specific protein BCP1 (BCP1).